We begin with the raw amino-acid sequence, 286 residues long: NAD kinase (286 aa).

Asp67 (proton acceptor) is an active-site residue. NAD(+) contacts are provided by residues 67-68 (DG), Arg72, 141-142 (ND), Arg152, Asp171, 182-187 (TAYSLS), and Gln242.

It belongs to the NAD kinase family. A divalent metal cation is required as a cofactor.

Its subcellular location is the cytoplasm. The catalysed reaction is NAD(+) + ATP = ADP + NADP(+) + H(+). In terms of biological role, involved in the regulation of the intracellular balance of NAD and NADP, and is a key enzyme in the biosynthesis of NADP. Catalyzes specifically the phosphorylation on 2'-hydroxyl of the adenosine moiety of NAD to yield NADP. The sequence is that of NAD kinase from Ruminiclostridium cellulolyticum (strain ATCC 35319 / DSM 5812 / JCM 6584 / H10) (Clostridium cellulolyticum).